Here is a 420-residue protein sequence, read N- to C-terminus: Serine hydroxymethyltransferase (420 aa).

Residues L121 and 125-127 (GHL) each bind (6S)-5,6,7,8-tetrahydrofolate. N6-(pyridoxal phosphate)lysine is present on K230. Residues E246 and 354-356 (SPF) each bind (6S)-5,6,7,8-tetrahydrofolate.

The protein belongs to the SHMT family. As to quaternary structure, homodimer. Pyridoxal 5'-phosphate serves as cofactor.

The protein resides in the cytoplasm. It catalyses the reaction (6R)-5,10-methylene-5,6,7,8-tetrahydrofolate + glycine + H2O = (6S)-5,6,7,8-tetrahydrofolate + L-serine. It functions in the pathway one-carbon metabolism; tetrahydrofolate interconversion. It participates in amino-acid biosynthesis; glycine biosynthesis; glycine from L-serine: step 1/1. In terms of biological role, catalyzes the reversible interconversion of serine and glycine with tetrahydrofolate (THF) serving as the one-carbon carrier. This reaction serves as the major source of one-carbon groups required for the biosynthesis of purines, thymidylate, methionine, and other important biomolecules. Also exhibits THF-independent aldolase activity toward beta-hydroxyamino acids, producing glycine and aldehydes, via a retro-aldol mechanism. This Rickettsia typhi (strain ATCC VR-144 / Wilmington) protein is Serine hydroxymethyltransferase.